We begin with the raw amino-acid sequence, 59 residues long: DNA gyrase inhibitor YacG (59 aa).

The Zn(2+) site is built by C7, C10, C25, and C29.

It belongs to the DNA gyrase inhibitor YacG family. Interacts with GyrB. It depends on Zn(2+) as a cofactor.

Functionally, inhibits all the catalytic activities of DNA gyrase by preventing its interaction with DNA. Acts by binding directly to the C-terminal domain of GyrB, which probably disrupts DNA binding by the gyrase. The polypeptide is DNA gyrase inhibitor YacG (Geobacter sulfurreducens (strain ATCC 51573 / DSM 12127 / PCA)).